The primary structure comprises 131 residues: Inactive protein FON2 SPARE1 (131 aa).

The tract at residues 67–131 (SPSSLTTTDR…VPTGPNPLHH (65 aa)) is disordered. Positions 76–97 (RHHHHHRHHGHHHHRGHDRWNR) are enriched in basic residues.

It belongs to the CLV3/ESR signal peptide family. In terms of tissue distribution, expressed in all aerial apical meristems, including the floral and inflorescence meristems in the reproductive phase and the shoot apical meristem in the vegetative phase. Also detected in the primordia of lateral organs such as the leaf and the floral organs.

Its function is as follows. Non functional suppressor of the fon2 mutation. In Oryza sativa subsp. japonica, the protein has a single amino acid substitution at the putative processing site of the signal peptide while in all the other varieties/species of domesticated and wild rice tested the protein is functional. This chain is Inactive protein FON2 SPARE1 (FOS1), found in Oryza sativa subsp. japonica (Rice).